Reading from the N-terminus, the 604-residue chain is 2-isopropylmalate synthase 2, mitochondrial (604 aa).

The transit peptide at 1–50 directs the protein to the mitochondrion; the sequence is MVKHSFIALAEHASKLRRSIPPVKLTYKNMLRDPSVKYRAFAPPKMVKRI. A Pyruvate carboxyltransferase domain is found at 60–335; it reads PRWLSTDLRD…SPNLDFSDLT (276 aa). Asp69, His274, His276, and Asn310 together coordinate a divalent metal cation.

It belongs to the alpha-IPM synthase/homocitrate synthase family. LeuA type 2 subfamily. In terms of assembly, homodimer. Requires a divalent metal cation as cofactor.

It is found in the mitochondrion. It carries out the reaction 3-methyl-2-oxobutanoate + acetyl-CoA + H2O = (2S)-2-isopropylmalate + CoA + H(+). It participates in amino-acid biosynthesis; L-leucine biosynthesis; L-leucine from 3-methyl-2-oxobutanoate: step 1/4. Its function is as follows. Catalyzes the condensation of the acetyl group of acetyl-CoA with 3-methyl-2-oxobutanoate (2-oxoisovalerate) to form 3-carboxy-3-hydroxy-4-methylpentanoate (2-isopropylmalate). Redundant to LEU4, responsible for about 20% of alpha-IPMS activity. Involved in leucine synthesis. In Saccharomyces cerevisiae (strain ATCC 204508 / S288c) (Baker's yeast), this protein is 2-isopropylmalate synthase 2, mitochondrial.